The primary structure comprises 591 residues: ATP-dependent RNA helicase DDX55 (591 aa).

A Q motif motif is present at residues tryptophan 9–serine 37. The Helicase ATP-binding domain occupies isoleucine 40 to isoleucine 223. An ATP-binding site is contributed by alanine 53 to threonine 60. Residues aspartate 171 to aspartate 174 carry the DEAD box motif. The region spanning lysine 254–aspartate 402 is the Helicase C-terminal domain. Disordered regions lie at residues aspartate 482–arginine 559 and glutamate 571–aspartate 591. Basic and acidic residues predominate over residues proline 485–lysine 513. Positions phenylalanine 486–glutamate 542 form a coiled coil. Over residues lysine 514 to arginine 538 the composition is skewed to basic residues. An important for nuclear localization region spans residues lysine 533–lysine 562. Over residues serine 544–leucine 555 the composition is skewed to acidic residues.

The protein belongs to the DEAD box helicase family. DDX55/SPB4 subfamily. In terms of assembly, interacts with 28S rRNA. Interacts with double-stranded RNA substrates in vitro; the interaction stimulates ATPase activity.

It is found in the nucleus. The protein resides in the nucleoplasm. It carries out the reaction ATP + H2O = ADP + phosphate + H(+). In terms of biological role, probable ATP-binding RNA helicase. Has ATPase activity and is involved in the maturation of precursor large subunit rRNAs. In Gallus gallus (Chicken), this protein is ATP-dependent RNA helicase DDX55 (DDX55).